We begin with the raw amino-acid sequence, 330 residues long: B3 domain-containing protein REM21 (330 aa).

The segment at residues 23–116 (PRFFTVFLSH…SYEVSIYGRG (94 aa)) is a DNA-binding region (TF-B3). Residues 129–138 (EISDDTEDDN) show a composition bias toward acidic residues. The segment at 129–169 (EISDDTEDDNVSLHSPSNVSLDSLSNDSHHSTSNVSLRSLS) is disordered. Over residues 142–162 (HSPSNVSLDSLSNDSHHSTSN) the composition is skewed to low complexity.

It is found in the nucleus. The protein is B3 domain-containing protein REM21 (REM21) of Arabidopsis thaliana (Mouse-ear cress).